We begin with the raw amino-acid sequence, 362 residues long: 3-dehydroquinate synthase (362 aa).

Residues 74-79 (DGEGYK), 108-112 (GVIGD), 132-133 (TT), lysine 145, lysine 154, and 172-175 (TLDT) each bind NAD(+). Zn(2+)-binding residues include glutamate 187, histidine 250, and histidine 267.

This sequence belongs to the sugar phosphate cyclases superfamily. Dehydroquinate synthase family. The cofactor is Co(2+). It depends on Zn(2+) as a cofactor. Requires NAD(+) as cofactor.

It localises to the cytoplasm. It catalyses the reaction 7-phospho-2-dehydro-3-deoxy-D-arabino-heptonate = 3-dehydroquinate + phosphate. The protein operates within metabolic intermediate biosynthesis; chorismate biosynthesis; chorismate from D-erythrose 4-phosphate and phosphoenolpyruvate: step 2/7. In terms of biological role, catalyzes the conversion of 3-deoxy-D-arabino-heptulosonate 7-phosphate (DAHP) to dehydroquinate (DHQ). The sequence is that of 3-dehydroquinate synthase from Geobacter sp. (strain M21).